Reading from the N-terminus, the 88-residue chain is Small ribosomal subunit protein uS15 (88 aa).

It belongs to the universal ribosomal protein uS15 family. Part of the 30S ribosomal subunit. Forms a bridge to the 50S subunit in the 70S ribosome, contacting the 23S rRNA.

Functionally, one of the primary rRNA binding proteins, it binds directly to 16S rRNA where it helps nucleate assembly of the platform of the 30S subunit by binding and bridging several RNA helices of the 16S rRNA. In terms of biological role, forms an intersubunit bridge (bridge B4) with the 23S rRNA of the 50S subunit in the ribosome. The polypeptide is Small ribosomal subunit protein uS15 (Geobacter metallireducens (strain ATCC 53774 / DSM 7210 / GS-15)).